The chain runs to 228 residues: Phosphoribosylformylglycinamidine synthase subunit PurQ (228 aa).

In terms of domain architecture, Glutamine amidotransferase type-1 spans 3–225 (FAVLVFPGSN…LTTLKSGVVT (223 aa)). Cys86 (nucleophile) is an active-site residue. Catalysis depends on residues His194 and Glu196.

As to quaternary structure, part of the FGAM synthase complex composed of 1 PurL, 1 PurQ and 2 PurS subunits.

The protein resides in the cytoplasm. The enzyme catalyses N(2)-formyl-N(1)-(5-phospho-beta-D-ribosyl)glycinamide + L-glutamine + ATP + H2O = 2-formamido-N(1)-(5-O-phospho-beta-D-ribosyl)acetamidine + L-glutamate + ADP + phosphate + H(+). The catalysed reaction is L-glutamine + H2O = L-glutamate + NH4(+). Its pathway is purine metabolism; IMP biosynthesis via de novo pathway; 5-amino-1-(5-phospho-D-ribosyl)imidazole from N(2)-formyl-N(1)-(5-phospho-D-ribosyl)glycinamide: step 1/2. Its function is as follows. Part of the phosphoribosylformylglycinamidine synthase complex involved in the purines biosynthetic pathway. Catalyzes the ATP-dependent conversion of formylglycinamide ribonucleotide (FGAR) and glutamine to yield formylglycinamidine ribonucleotide (FGAM) and glutamate. The FGAM synthase complex is composed of three subunits. PurQ produces an ammonia molecule by converting glutamine to glutamate. PurL transfers the ammonia molecule to FGAR to form FGAM in an ATP-dependent manner. PurS interacts with PurQ and PurL and is thought to assist in the transfer of the ammonia molecule from PurQ to PurL. The chain is Phosphoribosylformylglycinamidine synthase subunit PurQ from Latilactobacillus sakei subsp. sakei (strain 23K) (Lactobacillus sakei subsp. sakei).